Here is a 505-residue protein sequence, read N- to C-terminus: Putative thymidine phosphorylase (505 aa).

Belongs to the thymidine/pyrimidine-nucleoside phosphorylase family. Type 2 subfamily.

The catalysed reaction is thymidine + phosphate = 2-deoxy-alpha-D-ribose 1-phosphate + thymine. This Parvibaculum lavamentivorans (strain DS-1 / DSM 13023 / NCIMB 13966) protein is Putative thymidine phosphorylase.